The primary structure comprises 1429 residues: Autophagy-related protein 11 (1429 aa).

Coiled-coil stretches lie at residues 540–579 (GDDD…QSQA), 616–808 (EGID…LDDH), 842–985 (TLVE…HMNS), and 1106–1135 (RRIK…LQKD). The interval 574-622 (HRQSQASRPGNLFQPQGSQQRERVNSASSVRSSRFDDRRRSSEGIDPLM) is disordered. Polar residues predominate over residues 575–592 (RQSQASRPGNLFQPQGSQ). Residues 606-616 (SRFDDRRRSSE) are compositionally biased toward basic and acidic residues. 2 disordered regions span residues 1205-1224 (SKSL…ENDN) and 1333-1405 (RAHN…PTRR). 2 stretches are compositionally biased toward polar residues: residues 1206–1215 (KSLQPSSETE) and 1333–1362 (RAHN…GQKN). The span at 1384–1398 (KADEQPRSVVQREDS) shows a compositional bias: basic and acidic residues.

The protein belongs to the ATG11 family. Homodimer and potential homooligomers. Interacts with ATG1 kinase and the ATG19 and ATG34 cargo protein transporters. Interacts with ATG9, ATG17 and ATG20.

It is found in the preautophagosomal structure membrane. The protein localises to the vacuole membrane. In terms of biological role, involved in cytoplasm to vacuole transport (Cvt), pexophagy, mitophagy and nucleophagy. Recruits mitochondria for their selective degradation via autophagy (mitophagy) during starvation, through its interaction with ATG32. Works as scaffold proteins that recruit ATG proteins to the pre-autophagosome (PAS), the site of vesicle/autophagosome formation. Required for ATG9 anterograde transport from the mitochondria to the PAS. Also recruits the ATG19-prAPE1 complex to the PAS. Required for the Cvt vesicles completion. Autophagy is required for proper vegetative growth, asexual/sexual reproduction, and full virulence. Autophagy is particularly involved in the biosynthesis of deoxynivalenol (DON), an important virulence determinant. This is Autophagy-related protein 11 from Gibberella zeae (strain ATCC MYA-4620 / CBS 123657 / FGSC 9075 / NRRL 31084 / PH-1) (Wheat head blight fungus).